A 1551-amino-acid chain; its full sequence is UDP-glucose:glycoprotein glucosyltransferase 1 (1551 aa).

Residues 1–42 form the signal peptide; that stretch reads MCSRGDANAAGAAAARRVTGLCYNMGLLIALALLCLFSLAEA. Asn-269, Asn-536, Asn-1015, and Asn-1228 each carry an N-linked (GlcNAc...) asparagine glycan. Positions 1244 to 1551 are glucosyltransferase; the sequence is KTEEVKQDKD…QEGSQKHEEL (308 aa). Residue Ser-1277 is modified to Phosphoserine. The segment at 1531–1551 is disordered; the sequence is KELGTLHEEETQEGSQKHEEL. Residues 1548-1551 carry the Prevents secretion from ER motif; it reads HEEL.

Belongs to the glycosyltransferase 8 family. In terms of assembly, monomer as well as in a tight complex with SELENOF. Interacts with METTL23. Part of a large chaperone multiprotein complex comprising DNAJB11, HSP90B1, HSPA5, HYOU, PDIA2, PDIA4, PDIA6, PPIB, SDF2L1, UGGT1 and very small amounts of ERP29, but not, or at very low levels, CALR nor CANX. The cofactor is Ca(2+).

Its subcellular location is the endoplasmic reticulum lumen. It localises to the endoplasmic reticulum-Golgi intermediate compartment. It carries out the reaction N(4)-(alpha-D-Man-(1-&gt;2)-alpha-D-Man-(1-&gt;2)-alpha-D-Man-(1-&gt;3)-[alpha-D-Man-(1-&gt;2)-alpha-D-Man-(1-&gt;3)-[alpha-D-Man-(1-&gt;2)-alpha-D-Man-(1-&gt;6)]-alpha-D-Man-(1-&gt;6)]-beta-D-Man-(1-&gt;4)-beta-D-GlcNAc-(1-&gt;4)-beta-D-GlcNAc)-L-asparaginyl-[protein] (N-glucan mannose isomer 9A1,2,3B1,2,3) + UDP-alpha-D-glucose = N(4)-(alpha-D-Glc-(1-&gt;3)-alpha-D-Man-(1-&gt;2)-alpha-D-Man-(1-&gt;2)-alpha-D-Man-(1-&gt;3)-[alpha-D-Man-(1-&gt;2)-alpha-D-Man-(1-&gt;3)-[alpha-D-Man-(1-&gt;2)-alpha-D-Man-(1-&gt;6)]-alpha-D-Man-(1-&gt;6)]-beta-D-Man-(1-&gt;4)-beta-D-GlcNAc-(1-&gt;4)-beta-D-GlcNAc)-L-asparaginyl-[protein] + UDP + H(+). It functions in the pathway protein modification; protein glycosylation. Its function is as follows. Recognizes glycoproteins with minor folding defects. Reglucosylates single N-glycans near the misfolded part of the protein, thus providing quality control for protein folding in the endoplasmic reticulum. Reglucosylated proteins are recognized by calreticulin for recycling to the endoplasmic reticulum and refolding or degradation. The protein is UDP-glucose:glycoprotein glucosyltransferase 1 (Uggt1) of Rattus norvegicus (Rat).